Consider the following 784-residue polypeptide: LPS-assembly protein LptD (784 aa).

Positions 1–24 (MKKRIPTLLATMIATALYSQQGLA) are cleaved as a signal peptide. 2 cysteine pairs are disulfide-bonded: cysteine 31–cysteine 724 and cysteine 173–cysteine 725.

Belongs to the LptD family. In terms of assembly, component of the lipopolysaccharide transport and assembly complex. Interacts with LptE and LptA. Contains two intramolecular disulfide bonds.

It localises to the cell outer membrane. Functionally, together with LptE, is involved in the assembly of lipopolysaccharide (LPS) at the surface of the outer membrane. The protein is LPS-assembly protein LptD of Shigella flexneri serotype 5b (strain 8401).